The chain runs to 664 residues: 1,4-alpha-glucan branching enzyme GlgB 2 (664 aa).

Positions 1–17 (MGGKEMRNCKELKHEKN) are enriched in basic and acidic residues. Residues 1–31 (MGGKEMRNCKELKHEKNGNVTEKVGKNKGKS) are disordered. Aspartate 342 (nucleophile) is an active-site residue. Glutamate 395 acts as the Proton donor in catalysis.

This sequence belongs to the glycosyl hydrolase 13 family. GlgB subfamily. In terms of assembly, monomer.

It catalyses the reaction Transfers a segment of a (1-&gt;4)-alpha-D-glucan chain to a primary hydroxy group in a similar glucan chain.. Its pathway is glycan biosynthesis; glycogen biosynthesis. Its function is as follows. Catalyzes the formation of the alpha-1,6-glucosidic linkages in glycogen by scission of a 1,4-alpha-linked oligosaccharide from growing alpha-1,4-glucan chains and the subsequent attachment of the oligosaccharide to the alpha-1,6 position. This chain is 1,4-alpha-glucan branching enzyme GlgB 2 (glgB2), found in Clostridium perfringens (strain 13 / Type A).